Consider the following 74-residue polypeptide: Sec-independent protein translocase protein TatA (74 aa).

Residues 1–21 form a helical membrane-spanning segment; it reads MGGISIWNLVIIVLLVVLLFG. The tract at residues 51–74 is disordered; the sequence is AEFEKVEQKTAESTEQKAKEKEQA.

Belongs to the TatA/E family. The Tat system comprises two distinct complexes: a TatABC complex, containing multiple copies of TatA, TatB and TatC subunits, and a separate TatA complex, containing only TatA subunits. Substrates initially bind to the TatABC complex, which probably triggers association of the separate TatA complex to form the active translocon.

It is found in the cell inner membrane. In terms of biological role, part of the twin-arginine translocation (Tat) system that transports large folded proteins containing a characteristic twin-arginine motif in their signal peptide across membranes. TatA could form the protein-conducting channel of the Tat system. The chain is Sec-independent protein translocase protein TatA from Glaesserella parasuis serovar 5 (strain SH0165) (Haemophilus parasuis).